The primary structure comprises 125 residues: Large ribosomal subunit protein bL12 (125 aa).

It belongs to the bacterial ribosomal protein bL12 family. As to quaternary structure, homodimer. Part of the ribosomal stalk of the 50S ribosomal subunit. Forms a multimeric L10(L12)X complex, where L10 forms an elongated spine to which 2 to 4 L12 dimers bind in a sequential fashion. Binds GTP-bound translation factors.

Forms part of the ribosomal stalk which helps the ribosome interact with GTP-bound translation factors. Is thus essential for accurate translation. This is Large ribosomal subunit protein bL12 from Campylobacter jejuni subsp. jejuni serotype O:2 (strain ATCC 700819 / NCTC 11168).